The primary structure comprises 154 residues: Small ribosomal subunit protein uS15 (154 aa).

The span at 1 to 10 (MARMHSRRRG) shows a compositional bias: basic residues. The disordered stretch occupies residues 1–32 (MARMHSRRRGSSGSDRPTADEPPEWSEVDEDA). Acidic residues predominate over residues 21–32 (EPPEWSEVDEDA).

The protein belongs to the universal ribosomal protein uS15 family. As to quaternary structure, part of the 30S ribosomal subunit.

This is Small ribosomal subunit protein uS15 from Natronomonas pharaonis (strain ATCC 35678 / DSM 2160 / CIP 103997 / JCM 8858 / NBRC 14720 / NCIMB 2260 / Gabara) (Halobacterium pharaonis).